We begin with the raw amino-acid sequence, 428 residues long: Enolase (428 aa).

Q163 is a (2R)-2-phosphoglycerate binding site. E205 functions as the Proton donor in the catalytic mechanism. The Mg(2+) site is built by D242, E286, and D313. K338, R367, S368, and K389 together coordinate (2R)-2-phosphoglycerate. Residue K338 is the Proton acceptor of the active site.

The protein belongs to the enolase family. Mg(2+) serves as cofactor.

It is found in the cytoplasm. Its subcellular location is the secreted. The protein resides in the cell surface. It catalyses the reaction (2R)-2-phosphoglycerate = phosphoenolpyruvate + H2O. It functions in the pathway carbohydrate degradation; glycolysis; pyruvate from D-glyceraldehyde 3-phosphate: step 4/5. Catalyzes the reversible conversion of 2-phosphoglycerate (2-PG) into phosphoenolpyruvate (PEP). It is essential for the degradation of carbohydrates via glycolysis. This Bordetella bronchiseptica (strain ATCC BAA-588 / NCTC 13252 / RB50) (Alcaligenes bronchisepticus) protein is Enolase.